The following is a 609-amino-acid chain: Pentatricopeptide repeat-containing protein At5g13770, chloroplastic (609 aa).

The transit peptide at 1-44 (MAIASGSWVATVNHHANPHSFTSPTKPIFFLSQKPHNFHVCSSR) directs the protein to the chloroplast. PPR repeat units follow at residues 103-137 (ELRTTKHLISYLVSSKSWDLLVSVCEDLREHKALP), 138-168 (DGQTCSNLIRSCIRDRKFRITHCLLSVFRSD), 172-207 (AVSASDAAMKGFNKLQMYSSTIQVFDRLKQSVGVEP), 208-242 (SPGCYCRIMEAHEKIGENHKVVELFQEFKSQRLSF), 247-281 (SGSIYTIVCSSLAKSGRAFEALEVLEEMKDKGIPE), 282-316 (SSELYSMLIRAFAEAREVVITEKLFKEAGGKKLLK), 317-351 (DPEMCLKVVLMYVREGNMETTLEVVAAMRKAELKV), 352-386 (TDCILCAIVNGFSKQRGFAEAVKVYEWAMKEECEA), 387-421 (GQVTYAIAINAYCRLEKYNKAEMLFDEMVKKGFDK), 422-456 (CVVAYSNIMDMYGKTRRLSDAVRLMAKMKQRGCKP), 457-491 (NIWIYNSLIDMHGRAMDLRRAEKIWKEMKRAKVLP), 492-526 (DKVSYTSMISAYNRSKELERCVELYQEFRMNRGKI), and 527-561 (DRAMAGIMVGVFSKTSRIDELMRLLQDMKVEGTRL).

This sequence belongs to the PPR family. P subfamily.

The protein resides in the plastid. Its subcellular location is the chloroplast. This is Pentatricopeptide repeat-containing protein At5g13770, chloroplastic from Arabidopsis thaliana (Mouse-ear cress).